The following is a 638-amino-acid chain: Chaperone protein DnaK (638 aa).

A Phosphothreonine; by autocatalysis modification is found at Thr199. The segment covering 603 to 618 (YAQPGAEAGAEQQGSA) has biased composition (low complexity). A disordered region spans residues 603-638 (YAQPGAEAGAEQQGSANNADDDIVDAEFEEVNDDKK). The span at 621-638 (ADDDIVDAEFEEVNDDKK) shows a compositional bias: acidic residues.

It belongs to the heat shock protein 70 family.

In terms of biological role, acts as a chaperone. This chain is Chaperone protein DnaK, found in Hydrogenovibrio crunogenus (strain DSM 25203 / XCL-2) (Thiomicrospira crunogena).